Consider the following 131-residue polypeptide: Aspartate 1-decarboxylase (131 aa).

The Schiff-base intermediate with substrate; via pyruvic acid role is filled by Ser-25. Ser-25 carries the pyruvic acid (Ser) modification. Thr-57 contacts substrate. Tyr-58 serves as the catalytic Proton donor. Position 73-75 (73-75) interacts with substrate; that stretch reads GAA.

This sequence belongs to the PanD family. Heterooctamer of four alpha and four beta subunits. The cofactor is pyruvate. Post-translationally, is synthesized initially as an inactive proenzyme, which is activated by self-cleavage at a specific serine bond to produce a beta-subunit with a hydroxyl group at its C-terminus and an alpha-subunit with a pyruvoyl group at its N-terminus.

The protein resides in the cytoplasm. It catalyses the reaction L-aspartate + H(+) = beta-alanine + CO2. Its pathway is cofactor biosynthesis; (R)-pantothenate biosynthesis; beta-alanine from L-aspartate: step 1/1. Functionally, catalyzes the pyruvoyl-dependent decarboxylation of aspartate to produce beta-alanine. The protein is Aspartate 1-decarboxylase of Anaeromyxobacter sp. (strain Fw109-5).